The chain runs to 446 residues: tRNA modification GTPase MnmE (446 aa).

Arginine 22, glutamate 80, and lysine 119 together coordinate (6S)-5-formyl-5,6,7,8-tetrahydrofolate. The 156-residue stretch at glycine 215–glycine 370 folds into the TrmE-type G domain. Asparagine 225 contributes to the K(+) binding site. Residues asparagine 225–threonine 230, threonine 244–threonine 250, and aspartate 269–glycine 272 each bind GTP. Serine 229 contacts Mg(2+). Positions 244, 246, and 249 each coordinate K(+). Residue threonine 250 participates in Mg(2+) binding. A (6S)-5-formyl-5,6,7,8-tetrahydrofolate-binding site is contributed by lysine 446.

This sequence belongs to the TRAFAC class TrmE-Era-EngA-EngB-Septin-like GTPase superfamily. TrmE GTPase family. As to quaternary structure, homodimer. Heterotetramer of two MnmE and two MnmG subunits. K(+) serves as cofactor.

Its subcellular location is the cytoplasm. Functionally, exhibits a very high intrinsic GTPase hydrolysis rate. Involved in the addition of a carboxymethylaminomethyl (cmnm) group at the wobble position (U34) of certain tRNAs, forming tRNA-cmnm(5)s(2)U34. In Legionella pneumophila (strain Corby), this protein is tRNA modification GTPase MnmE.